We begin with the raw amino-acid sequence, 224 residues long: Peptide deformylase 3 (224 aa).

Cysteine 135 and histidine 177 together coordinate Fe cation. Glutamate 178 is a catalytic residue. Position 181 (histidine 181) interacts with Fe cation.

This sequence belongs to the polypeptide deformylase family. Fe(2+) serves as cofactor.

The enzyme catalyses N-terminal N-formyl-L-methionyl-[peptide] + H2O = N-terminal L-methionyl-[peptide] + formate. Functionally, removes the formyl group from the N-terminal Met of newly synthesized proteins. Requires at least a dipeptide for an efficient rate of reaction. N-terminal L-methionine is a prerequisite for activity but the enzyme has broad specificity at other positions. This Streptomyces avermitilis (strain ATCC 31267 / DSM 46492 / JCM 5070 / NBRC 14893 / NCIMB 12804 / NRRL 8165 / MA-4680) protein is Peptide deformylase 3.